A 420-amino-acid polypeptide reads, in one-letter code: Gamma-glutamyl phosphate reductase (420 aa).

The protein belongs to the gamma-glutamyl phosphate reductase family.

The protein localises to the cytoplasm. It carries out the reaction L-glutamate 5-semialdehyde + phosphate + NADP(+) = L-glutamyl 5-phosphate + NADPH + H(+). It participates in amino-acid biosynthesis; L-proline biosynthesis; L-glutamate 5-semialdehyde from L-glutamate: step 2/2. Functionally, catalyzes the NADPH-dependent reduction of L-glutamate 5-phosphate into L-glutamate 5-semialdehyde and phosphate. The product spontaneously undergoes cyclization to form 1-pyrroline-5-carboxylate. This is Gamma-glutamyl phosphate reductase from Neisseria meningitidis serogroup C / serotype 2a (strain ATCC 700532 / DSM 15464 / FAM18).